Reading from the N-terminus, the 151-residue chain is Large ribosomal subunit protein bL9 (151 aa).

This sequence belongs to the bacterial ribosomal protein bL9 family.

Binds to the 23S rRNA. This chain is Large ribosomal subunit protein bL9, found in Azoarcus sp. (strain BH72).